Consider the following 240-residue polypeptide: NADH-quinone oxidoreductase subunit C (240 aa).

Residues 1–82 (MSEEEKPKPK…PVDENRDPEP (82 aa)) form a disordered region. Residues 11 to 20 (LSPALAAKMA) are compositionally biased toward low complexity. Positions 67–82 (DKPKAEPVDENRDPEP) are enriched in basic and acidic residues.

The protein belongs to the complex I 30 kDa subunit family. In terms of assembly, NDH-1 is composed of 14 different subunits. Subunits NuoB, C, D, E, F, and G constitute the peripheral sector of the complex.

The protein localises to the cell inner membrane. It carries out the reaction a quinone + NADH + 5 H(+)(in) = a quinol + NAD(+) + 4 H(+)(out). Functionally, NDH-1 shuttles electrons from NADH, via FMN and iron-sulfur (Fe-S) centers, to quinones in the respiratory chain. The immediate electron acceptor for the enzyme in this species is believed to be a menaquinone. Couples the redox reaction to proton translocation (for every two electrons transferred, four hydrogen ions are translocated across the cytoplasmic membrane), and thus conserves the redox energy in a proton gradient. This is NADH-quinone oxidoreductase subunit C from Chloroherpeton thalassium (strain ATCC 35110 / GB-78).